Here is a 105-residue protein sequence, read N- to C-terminus: Keratin-associated protein 17-1 (105 aa).

Interacts with hair keratins.

Its function is as follows. In the hair cortex, hair keratin intermediate filaments are embedded in an interfilamentous matrix, consisting of hair keratin-associated proteins (KRTAP), which are essential for the formation of a rigid and resistant hair shaft through their extensive disulfide bond cross-linking with abundant cysteine residues of hair keratins. The matrix proteins include the high-sulfur and high-glycine-tyrosine keratins. The polypeptide is Keratin-associated protein 17-1 (KRTAP17-1) (Homo sapiens (Human)).